A 1220-amino-acid chain; its full sequence is Cullin-associated NEDD8-dissociated protein 1 (1220 aa).

12 HEAT repeats span residues 1–35 (MEEG…DANH), 42–79 (ESFP…KIPQ), 121–157 (FYTS…SLEI), 259–295 (ADYT…YQQV), 365–410 (LSRL…HVPR), 615–650 (IFLR…SVTD), 680–700 (TTAY…YLAE), 701–737 (SLLE…SILL), 738–775 (KSKN…VISK), 810–847 (FQSK…DYGK), 850–887 (LPAN…QSEK), and 1020–1057 (EVSQ…KSSV).

This sequence belongs to the CAND family.

It localises to the nucleus. Its function is as follows. Key assembly factor of SCF (SKP1-CUL1-F-box protein) E3 ubiquitin ligase complexes that promotes the exchange of the substrate-recognition F-box subunit in SCF complexes, thereby playing a key role in the cellular repertoire of SCF complexes. Acts as a F-box protein exchange factor. In Schizosaccharomyces pombe (strain 972 / ATCC 24843) (Fission yeast), this protein is Cullin-associated NEDD8-dissociated protein 1 (knd1).